The chain runs to 266 residues: Protein crossbronx-like (266 aa).

The UBC core domain maps to 15-178; it reads KQGYHILAEY…VQEQAIASRN (164 aa).

This sequence belongs to the ubiquitin-conjugating enzyme family. FTS subfamily.

The sequence is that of Protein crossbronx-like from Drosophila yakuba (Fruit fly).